A 134-amino-acid chain; its full sequence is D-ribose pyranase (134 aa).

Histidine 20 (proton donor) is an active-site residue. Substrate-binding positions include aspartate 28, histidine 99, and 123 to 125; that span reads FSN.

Belongs to the RbsD / FucU family. RbsD subfamily. As to quaternary structure, homodecamer.

Its subcellular location is the cytoplasm. It catalyses the reaction beta-D-ribopyranose = beta-D-ribofuranose. The protein operates within carbohydrate metabolism; D-ribose degradation; D-ribose 5-phosphate from beta-D-ribopyranose: step 1/2. Its function is as follows. Catalyzes the interconversion of beta-pyran and beta-furan forms of D-ribose. This is D-ribose pyranase from Staphylococcus epidermidis (strain ATCC 12228 / FDA PCI 1200).